The chain runs to 432 residues: UDP-N-acetylglucosamine 1-carboxyvinyltransferase (432 aa).

22–23 (KN) is a phosphoenolpyruvate binding site. R101 is a binding site for UDP-N-acetyl-alpha-D-glucosamine. C125 functions as the Proton donor in the catalytic mechanism. C125 is modified (2-(S-cysteinyl)pyruvic acid O-phosphothioketal). UDP-N-acetyl-alpha-D-glucosamine is bound by residues 130–134 (RPVDL), D315, and I337.

This sequence belongs to the EPSP synthase family. MurA subfamily.

Its subcellular location is the cytoplasm. The enzyme catalyses phosphoenolpyruvate + UDP-N-acetyl-alpha-D-glucosamine = UDP-N-acetyl-3-O-(1-carboxyvinyl)-alpha-D-glucosamine + phosphate. Its pathway is cell wall biogenesis; peptidoglycan biosynthesis. In terms of biological role, cell wall formation. Adds enolpyruvyl to UDP-N-acetylglucosamine. The polypeptide is UDP-N-acetylglucosamine 1-carboxyvinyltransferase (Paramagnetospirillum magneticum (strain ATCC 700264 / AMB-1) (Magnetospirillum magneticum)).